The chain runs to 189 residues: Peptidyl-tRNA hydrolase (189 aa).

A tRNA-binding site is contributed by Y15. The active-site Proton acceptor is the H20. 3 residues coordinate tRNA: F66, N68, and N114.

It belongs to the PTH family. As to quaternary structure, monomer.

It is found in the cytoplasm. It catalyses the reaction an N-acyl-L-alpha-aminoacyl-tRNA + H2O = an N-acyl-L-amino acid + a tRNA + H(+). In terms of biological role, hydrolyzes ribosome-free peptidyl-tRNAs (with 1 or more amino acids incorporated), which drop off the ribosome during protein synthesis, or as a result of ribosome stalling. Catalyzes the release of premature peptidyl moieties from peptidyl-tRNA molecules trapped in stalled 50S ribosomal subunits, and thus maintains levels of free tRNAs and 50S ribosomes. The chain is Peptidyl-tRNA hydrolase from Streptococcus mutans serotype c (strain ATCC 700610 / UA159).